Consider the following 476-residue polypeptide: Cytochrome P450 monooxygenase ppzE (476 aa).

Cys-452 contacts heme.

It belongs to the cytochrome P450 family. It depends on heme as a cofactor.

The protein operates within secondary metabolite biosynthesis. Cytochrome P450 monooxygenase; part of the gene cluster that mediates the biosynthesis of pyrrolopyrazines, secondary metabolites showing insecticidal activity. The role of ppzE within the pathway has still to be determined. The single multifunctional NRPS ppzA is sufficient to produce peramine via condensation of 1-pyrroline-5-carboxylate and arginine, N-methylation of the alpha-amino group of arginine and reduction of the thioester and the cyclization to form an iminium ion resulting in release from the peptide synthetase. Deprotonation of this intermediate and oxidation of the pyrroline ring would give rise to peramine. In Epichloe species that produce only peramine, the peramine synthetase gene is not localized in a gene cluster, in contrast to Metarhizium species that contain additional pyrrolopyrazine biosynthesis genes. The 2-oxoglutarate-Fe(II) type oxidoreductase ppzC hydroxylates peramine to yield the newly identified compound 8-hydroxyperamine whereas ppzD converts L-proline into trans-4-hydroxy-L-proline, a precursor of peramine biosynthesis. The sequence is that of Cytochrome P450 monooxygenase ppzE from Metarhizium majus (strain ARSEF 297).